Reading from the N-terminus, the 476-residue chain is Proton-coupled amino acid transporter 1 (476 aa).

A compositionally biased stretch (basic and acidic residues) spans 1 to 15 (MSTQRLRNEDYHDYS). The interval 1-32 (MSTQRLRNEDYHDYSSTDVSPEESPSEGLNNL) is disordered. The Cytoplasmic segment spans residues 1–51 (MSTQRLRNEDYHDYSSTDVSPEESPSEGLNNLSSPGSYQRFGQSNSTTWFQ). A helical membrane pass occupies residues 52–72 (TLIHLLKGNIGTGLLGLPLAV). Over 73-78 (KNAGIV) the chain is Extracellular. Residues 79-99 (MGPISLLIIGIVAVHCMGILV) form a helical membrane-spanning segment. The Cytoplasmic segment spans residues 100-141 (KCAHHFCRRLNKSFVDYGDTVMYGLESSPCSWLRNHAHWGRR). The chain crosses the membrane as a helical span at residues 142-162 (VVDFFLIVTQLGFCCVYFVFL). The Extracellular segment spans residues 163–190 (ADNFKQVIEAANGTTNNCHNNETVILTP). Residues asparagine 174 and asparagine 183 are each glycosylated (N-linked (GlcNAc...) asparagine). A disulfide bridge connects residues cysteine 180 and cysteine 329. Residues 191–211 (TMDSRLYMLSFLPFLVLLVFI) form a helical membrane-spanning segment. Topologically, residues 212–215 (RNLR) are cytoplasmic. A helical membrane pass occupies residues 216–236 (ALSIFSLLANITMLVSLVMIY). Residues 237-257 (QFIVQRIPDPSHLPLVAPWKT) lie on the Extracellular side of the membrane. Residues 258–278 (YPLFFGTAIFSFEGIGMVLPL) traverse the membrane as a helical segment. Over 279–289 (ENKMKDPRKFP) the chain is Cytoplasmic. Residues 290-310 (LILYLGMVIVTILYISLGCLG) traverse the membrane as a helical segment. Residues 311 to 342 (YLQFGANIQGSITLNLPNCWLYQSVKLLYSIG) lie on the Extracellular side of the membrane. The helical transmembrane segment at 343 to 363 (IFFTYALQFYVPAEIIIPFFV) threads the bilayer. The Cytoplasmic segment spans residues 364 to 372 (SRAPEHCEL). Residues 373-393 (VVDLFVRTVLVCLTCILAILI) traverse the membrane as a helical segment. At 394–397 (PRLD) the chain is on the extracellular side. Residues 398–418 (LVISLVGSVSSSALALIIPPL) traverse the membrane as a helical segment. The Cytoplasmic segment spans residues 419–439 (LEVTTFYSEGMSPLTIFKDAL). Residues 440–460 (ISILGFVGFVVGTYEALYELI) traverse the membrane as a helical segment. The Extracellular segment spans residues 461 to 476 (QPSNAPIFINSTCAFI). Asparagine 470 is a glycosylation site (N-linked (GlcNAc...) asparagine).

Belongs to the amino acid/polyamine transporter 2 family.

The protein resides in the cell membrane. Its subcellular location is the apical cell membrane. It localises to the lysosome membrane. It catalyses the reaction glycine(in) + H(+)(in) = glycine(out) + H(+)(out). It carries out the reaction L-alanine(in) + H(+)(in) = L-alanine(out) + H(+)(out). The enzyme catalyses D-alanine(in) + H(+)(in) = D-alanine(out) + H(+)(out). The catalysed reaction is L-proline(out) + H(+)(out) = L-proline(in) + H(+)(in). It catalyses the reaction D-proline(out) + H(+)(out) = D-proline(in) + H(+)(in). It carries out the reaction D-serine(out) + H(+)(out) = D-serine(in) + H(+)(in). The enzyme catalyses L-serine(in) + H(+)(in) = L-serine(out) + H(+)(out). The catalysed reaction is 4-aminobutanoate(in) + H(+)(in) = 4-aminobutanoate(out) + H(+)(out). It catalyses the reaction beta-alanine(in) + H(+)(in) = beta-alanine(out) + H(+)(out). Its function is as follows. Electrogenic proton/amino acid symporter with selectivity for small apolar L-amino acids, their D-enantiomers and selected amino acid derivatives such as 4-aminobutanoate/GABA. May be involved in the efflux from the lysosomal compartment of neutral amino acids resulting from proteolysis. May play a role in specifying sites for exocytosis in neurons. The polypeptide is Proton-coupled amino acid transporter 1 (Homo sapiens (Human)).